A 182-amino-acid chain; its full sequence is MSRIGRKPIDIPSGVDVKIDGNVITVKGPKGTLTREIHPEMIVKIENNQIIVQRPSDERFHKALHGLTRTLIANMVEGVTKGYEKVLEVVGIGYRAQKQGKKLVLNVGYSHPVEIEEPAGITIEVPDQNRIVVKGIDKQQVGNFAANIRKVREPDPYLGKGIKYADEVLRLKEGKAGKGGKK.

The protein belongs to the universal ribosomal protein uL6 family. In terms of assembly, part of the 50S ribosomal subunit.

Functionally, this protein binds to the 23S rRNA, and is important in its secondary structure. It is located near the subunit interface in the base of the L7/L12 stalk, and near the tRNA binding site of the peptidyltransferase center. In Caldicellulosiruptor bescii (strain ATCC BAA-1888 / DSM 6725 / KCTC 15123 / Z-1320) (Anaerocellum thermophilum), this protein is Large ribosomal subunit protein uL6.